The following is a 573-amino-acid chain: Urease subunit alpha (573 aa).

In terms of domain architecture, Urease spans 136–573; the sequence is GAIDCHVHLI…LPMAQRYFLF (438 aa). Residues H141, H143, and K224 each contribute to the Ni(2+) site. Residue K224 is modified to N6-carboxylysine. H226 is a substrate binding site. Residues H253 and H279 each coordinate Ni(2+). H327 (proton donor) is an active-site residue. D367 serves as a coordination point for Ni(2+).

This sequence belongs to the metallo-dependent hydrolases superfamily. Urease alpha subunit family. As to quaternary structure, heterotrimer of UreA (gamma), UreB (beta) and UreC (alpha) subunits. Three heterotrimers associate to form the active enzyme. It depends on Ni cation as a cofactor. Carboxylation allows a single lysine to coordinate two nickel ions.

The protein localises to the cytoplasm. It catalyses the reaction urea + 2 H2O + H(+) = hydrogencarbonate + 2 NH4(+). It participates in nitrogen metabolism; urea degradation; CO(2) and NH(3) from urea (urease route): step 1/1. This chain is Urease subunit alpha, found in Mycolicibacterium vanbaalenii (strain DSM 7251 / JCM 13017 / BCRC 16820 / KCTC 9966 / NRRL B-24157 / PYR-1) (Mycobacterium vanbaalenii).